The sequence spans 776 residues: Acetone carboxylase alpha subunit (776 aa).

Heterohexamer of two alpha, two beta and two gamma subunits. The cofactor is Fe cation. Mg(2+) serves as cofactor. Requires Zn(2+) as cofactor. The N-terminus is blocked.

It catalyses the reaction acetone + hydrogencarbonate + 2 ATP + 3 H2O = acetoacetate + 2 AMP + 4 phosphate + 4 H(+). In terms of biological role, catalyzes the carboxylation of acetone to form acetoacetate. Has a reduced activity on butanone, and no activity on 2-pentatone, 3-pentatone, 2-hexanone, chloroacetone, pyruvate, phosphoenolpyruvate, acetaldehyde, propionaldehyde and propylene oxide. This Xanthobacter autotrophicus (strain ATCC BAA-1158 / Py2) protein is Acetone carboxylase alpha subunit.